Reading from the N-terminus, the 169-residue chain is Disulfide bond formation protein B (169 aa).

Topologically, residues Met1–Ala14 are cytoplasmic. Residues Trp15–Tyr31 form a helical membrane-spanning segment. At Phe32–Val49 the chain is on the periplasmic side. A disulfide bond links Cys41 and Cys44. Residues Ala50–Pro65 traverse the membrane as a helical segment. At Lys66 to Trp71 the chain is on the cytoplasmic side. A helical transmembrane segment spans residues Leu72–Trp89. The Periplasmic portion of the chain corresponds to Gln90–Gln144. A disulfide bridge links Cys104 with Cys130. Residues Trp145–Ser163 traverse the membrane as a helical segment. Residues Gln164–Lys169 lie on the Cytoplasmic side of the membrane.

It belongs to the DsbB family.

The protein resides in the cell inner membrane. Functionally, required for disulfide bond formation in some periplasmic proteins. Acts by oxidizing the DsbA protein. This is Disulfide bond formation protein B from Photorhabdus laumondii subsp. laumondii (strain DSM 15139 / CIP 105565 / TT01) (Photorhabdus luminescens subsp. laumondii).